A 500-amino-acid polypeptide reads, in one-letter code: Guanosine-5'-triphosphate,3'-diphosphate pyrophosphatase (500 aa).

This sequence belongs to the GppA/Ppx family. GppA subfamily.

It carries out the reaction guanosine 3'-diphosphate 5'-triphosphate + H2O = guanosine 3',5'-bis(diphosphate) + phosphate + H(+). It functions in the pathway purine metabolism; ppGpp biosynthesis; ppGpp from GTP: step 2/2. In terms of biological role, catalyzes the conversion of pppGpp to ppGpp. Guanosine pentaphosphate (pppGpp) is a cytoplasmic signaling molecule which together with ppGpp controls the 'stringent response', an adaptive process that allows bacteria to respond to amino acid starvation, resulting in the coordinated regulation of numerous cellular activities. This Photorhabdus laumondii subsp. laumondii (strain DSM 15139 / CIP 105565 / TT01) (Photorhabdus luminescens subsp. laumondii) protein is Guanosine-5'-triphosphate,3'-diphosphate pyrophosphatase.